Consider the following 57-residue polypeptide: Small hydrophobic protein (57 aa).

Residues 1–8 (MPAIQPPL) lie on the Virion surface side of the membrane. Residues 9–29 (YPTFLLLILLSLIITLYAWII) form a helical membrane-spanning segment. The Intravirion portion of the chain corresponds to 30–57 (STITYKTAMRHAALYQRSFFRWSFDHSL).

It belongs to the rubulavirus small hydrophobic protein family. As to quaternary structure, interacts with host TNFRSF1A, RIPK1 and IRAK1; these interactions interfere with host NF-kappa-B activation at the level of receptor complexes. Interacts with host protein UBQLN4.

The protein resides in the virion membrane. The protein localises to the host cell membrane. In terms of biological role, plays a role in the inhibition of the host NF-kappa-B pathway. This inhibition occurs at the receptor level, by preventing the signaling of TNFR1 as well as IL-1R and TLR3. This Homo sapiens (Human) protein is Small hydrophobic protein (SH).